Consider the following 153-residue polypeptide: Cystatin-9 (153 aa).

An N-terminal signal peptide occupies residues 1–27 (MGRQRRCRWAQPWTLLLLLLGPRLLVT).

This sequence belongs to the cystatin family.

The protein localises to the secreted. May play a role in hematopoietic differentiation or inflammation. The polypeptide is Cystatin-9 (CST9) (Bos taurus (Bovine)).